The following is a 402-amino-acid chain: tRNA(Met) cytidine acetate ligase (402 aa).

ATP contacts are provided by residues 7–20 (ITEY…HELH), G102, N171, and R196.

It belongs to the TmcAL family.

The protein localises to the cytoplasm. It carries out the reaction cytidine(34) in elongator tRNA(Met) + acetate + ATP = N(4)-acetylcytidine(34) in elongator tRNA(Met) + AMP + diphosphate. Catalyzes the formation of N(4)-acetylcytidine (ac(4)C) at the wobble position of elongator tRNA(Met), using acetate and ATP as substrates. First activates an acetate ion to form acetyladenylate (Ac-AMP) and then transfers the acetyl group to tRNA to form ac(4)C34. The protein is tRNA(Met) cytidine acetate ligase of Clostridium perfringens (strain ATCC 13124 / DSM 756 / JCM 1290 / NCIMB 6125 / NCTC 8237 / Type A).